Consider the following 124-residue polypeptide: Small ribosomal subunit protein uS12 (124 aa).

D89 is modified (3-methylthioaspartic acid). Residues 104–124 (TAGVKDRRQSRSKYGAKAPKE) form a disordered region.

This sequence belongs to the universal ribosomal protein uS12 family. As to quaternary structure, part of the 30S ribosomal subunit. Contacts proteins S8 and S17. May interact with IF1 in the 30S initiation complex.

In terms of biological role, with S4 and S5 plays an important role in translational accuracy. Functionally, interacts with and stabilizes bases of the 16S rRNA that are involved in tRNA selection in the A site and with the mRNA backbone. Located at the interface of the 30S and 50S subunits, it traverses the body of the 30S subunit contacting proteins on the other side and probably holding the rRNA structure together. The combined cluster of proteins S8, S12 and S17 appears to hold together the shoulder and platform of the 30S subunit. In Synechococcus sp. (strain CC9605), this protein is Small ribosomal subunit protein uS12.